The chain runs to 814 residues: DNA topoisomerase 1 (814 aa).

Low complexity predominate over residues 1–12 (MSSSDSDSVSLS). The tract at residues 1–180 (MSSSDSDSVS…PNDEEDEDED (180 aa)) is disordered. A compositionally biased stretch (basic residues) spans 13–22 (IRRRQRRGSS). Residues Ser52, Ser54, and Ser136 each carry the phosphoserine modification. Phosphothreonine is present on Thr138. Interaction with DNA regions lie at residues 404 to 405 (KY), 467 to 472 (RAGNEK), and 559 to 561 (SAK). In terms of domain architecture, Topo IB-type catalytic spans 411-814 (GSSLKGQSDL…AADTPPDWKW (404 aa)). Residue Tyr773 is the O-(3'-phospho-DNA)-tyrosine intermediate of the active site.

Belongs to the type IB topoisomerase family. In terms of assembly, monomer.

The enzyme catalyses ATP-independent breakage of single-stranded DNA, followed by passage and rejoining.. Functionally, releases the supercoiling and torsional tension of DNA introduced during the DNA replication and transcription by transiently cleaving and rejoining one strand of the DNA duplex. Introduces a single-strand break via transesterification at a target site in duplex DNA. The scissile phosphodiester is attacked by the catalytic tyrosine of the enzyme, resulting in the formation of a DNA-(3'-phosphotyrosyl)-enzyme intermediate and the expulsion of a 5'-OH DNA strand. TThe free DNA strand then rotates around the intact phosphodiester bond on the opposing strand, thus removing DNA supercoils. Finally, in the religation step, the DNA 5'-OH attacks the covalent intermediate to expel the active-site tyrosine and restore the DNA phosphodiester backbone. The protein is DNA topoisomerase 1 (top1) of Schizosaccharomyces pombe (strain 972 / ATCC 24843) (Fission yeast).